Reading from the N-terminus, the 487-residue chain is Putative sugar kinase YoaC (487 aa).

Belongs to the FGGY kinase family.

This is Putative sugar kinase YoaC (yoaC) from Bacillus subtilis (strain 168).